Reading from the N-terminus, the 570-residue chain is MSEKHPGPLVVEGKLSDAERMKRESNFLRGTIAEDLNDGLTGGFHGDNFLLIRFHGMYQQDDRDIRAERAAQKLEPRHAMLLRCRLPGGVITTTQWKAIDKFAADNTIYGSIRLTNRQTFQFHGILKKNVKPVHQMLHSVGLDALATANDMNRNVLCTSNPYESQLHAEAYEWAKKISEHLLPRTRAYAEIWLDQEKVATTDEEPILGQTYLPRKFKTTVVIPPQNDIDLHANDMNLVAIAENGKLVGFNLLVGGGLSIEHGNKKTYARTASEFGYLPLEHTLAVAEAVVTTQRDWGNRTDRKNAKTKYTLERVGVDTFKEEVERRAGIKFEPIRPYEFTGRGDRIGWVKGIDNNWHLTLFIENGRILDYSGRPLKTGLLEIAKIHQGEFRITANQNLIIASVPESQKAKIETLARDHGLMNAVKPQRENSMACVSFPTCPLAMAEAERFLPSFTDKVEAILEKHGIPDEHIVMRVTGCPNGCGRAMLAEIGLVGKAPGRYNLHLGGNRIGTRIPRMYKENITEPDILASLGELIGRWAKEREAGEGFGDFTVRAGIIRPVLDPARDFWE.

4 residues coordinate [4Fe-4S] cluster: Cys-434, Cys-440, Cys-479, and Cys-483. Residue Cys-483 participates in siroheme binding.

This sequence belongs to the nitrite and sulfite reductase 4Fe-4S domain family. As to quaternary structure, alpha(8)-beta(8). The alpha component is a flavoprotein, the beta component is a hemoprotein. Requires siroheme as cofactor. [4Fe-4S] cluster serves as cofactor.

It catalyses the reaction hydrogen sulfide + 3 NADP(+) + 3 H2O = sulfite + 3 NADPH + 4 H(+). The protein operates within sulfur metabolism; hydrogen sulfide biosynthesis; hydrogen sulfide from sulfite (NADPH route): step 1/1. Its function is as follows. Component of the sulfite reductase complex that catalyzes the 6-electron reduction of sulfite to sulfide. This is one of several activities required for the biosynthesis of L-cysteine from sulfate. The chain is Sulfite reductase [NADPH] hemoprotein beta-component from Salmonella paratyphi A (strain ATCC 9150 / SARB42).